A 210-amino-acid polypeptide reads, in one-letter code: Thiamine-phosphate synthase (210 aa).

Residues 36 to 40 (QLRIK) and N68 contribute to the 4-amino-2-methyl-5-(diphosphooxymethyl)pyrimidine site. 2 residues coordinate Mg(2+): D69 and D88. Residue S107 participates in 4-amino-2-methyl-5-(diphosphooxymethyl)pyrimidine binding. Residue 133 to 135 (TQT) coordinates 2-[(2R,5Z)-2-carboxy-4-methylthiazol-5(2H)-ylidene]ethyl phosphate. Residue K136 coordinates 4-amino-2-methyl-5-(diphosphooxymethyl)pyrimidine. 2-[(2R,5Z)-2-carboxy-4-methylthiazol-5(2H)-ylidene]ethyl phosphate-binding positions include G165 and 185–186 (VS).

It belongs to the thiamine-phosphate synthase family. Requires Mg(2+) as cofactor.

The catalysed reaction is 2-[(2R,5Z)-2-carboxy-4-methylthiazol-5(2H)-ylidene]ethyl phosphate + 4-amino-2-methyl-5-(diphosphooxymethyl)pyrimidine + 2 H(+) = thiamine phosphate + CO2 + diphosphate. It carries out the reaction 2-(2-carboxy-4-methylthiazol-5-yl)ethyl phosphate + 4-amino-2-methyl-5-(diphosphooxymethyl)pyrimidine + 2 H(+) = thiamine phosphate + CO2 + diphosphate. The enzyme catalyses 4-methyl-5-(2-phosphooxyethyl)-thiazole + 4-amino-2-methyl-5-(diphosphooxymethyl)pyrimidine + H(+) = thiamine phosphate + diphosphate. It functions in the pathway cofactor biosynthesis; thiamine diphosphate biosynthesis; thiamine phosphate from 4-amino-2-methyl-5-diphosphomethylpyrimidine and 4-methyl-5-(2-phosphoethyl)-thiazole: step 1/1. In terms of biological role, condenses 4-methyl-5-(beta-hydroxyethyl)thiazole monophosphate (THZ-P) and 2-methyl-4-amino-5-hydroxymethyl pyrimidine pyrophosphate (HMP-PP) to form thiamine monophosphate (TMP). This chain is Thiamine-phosphate synthase, found in Cronobacter sakazakii (strain ATCC BAA-894) (Enterobacter sakazakii).